Reading from the N-terminus, the 568-residue chain is Nitrite reductase (568 aa).

The first 25 residues, 1-25 (MPFGKPLVGTLLASLTLLGLATAHA), serve as a signal peptide directing secretion. The interval 26–54 (KDDMKAAEQYQGAASAVDPAHVVRTNGAP) is N-terminal tail. Positions 55–140 (DMSESEFNEA…AKYIQHTPPQ (86 aa)) constitute a Cytochrome c domain. Residues C72, C75, H76, R96, T109, and M113 each contribute to the heme c site. A D1-heme domain region spans residues 141–568 (PPEWGMPEMR…NVYNTQHDVY (428 aa)). Heme d1 contacts are provided by H207, R250, S251, Y270, R397, and Q508.

As to quaternary structure, homodimer. Heme c serves as cofactor. The cofactor is heme.

It localises to the periplasm. It carries out the reaction nitric oxide + Fe(III)-[cytochrome c] + H2O = Fe(II)-[cytochrome c] + nitrite + 2 H(+). The enzyme catalyses A + NH4(+) + H2O = hydroxylamine + AH2 + H(+). This chain is Nitrite reductase (nirS), found in Pseudomonas aeruginosa (strain ATCC 15692 / DSM 22644 / CIP 104116 / JCM 14847 / LMG 12228 / 1C / PRS 101 / PAO1).